A 267-amino-acid polypeptide reads, in one-letter code: 14-3-3-like protein GF14 chi (267 aa).

N-acetylalanine is present on A2. Phosphoserine is present on residues S72 and S195. T216 carries the post-translational modification Phosphothreonine. Position 267 is a phosphoserine (S267).

Belongs to the 14-3-3 family. In terms of assembly, interacts with TPK1. Interacts with the isocitrate dehydrogenase IDH3, and malate dehydrogenases MDH1 and MDH2. Interacts with DREB1A and DREB1B in the nucleus. Interacts with CINV1.

The protein localises to the nucleus. Its subcellular location is the cytoplasm. Is associated with a DNA binding complex that binds to the G box, a well-characterized cis-acting DNA regulatory element found in plant genes. Involved in the regulation of nutrient metabolism. This chain is 14-3-3-like protein GF14 chi (GRF1), found in Arabidopsis thaliana (Mouse-ear cress).